The sequence spans 726 residues: Eukaryotic translation initiation factor 3 subunit B (726 aa).

The sufficient for interaction with HCR1 and TIF32 stretch occupies residues 1–94 (MSAALEDIKL…LFVECASPAD (94 aa)). Positions 1–219 (MSAALEDIKL…GVVMWGGPHF (219 aa)) are sufficient for interaction with PIC8. Positions 37 to 120 (QYIVVCGAPV…HRLFIYTMRD (84 aa)) constitute an RRM domain. WD repeat units lie at residues 142 to 182 (FPTS…EESV), 186 to 224 (RKNW…RLRR), 235 to 283 (VSPS…LQST), 331 to 374 (LKVP…MSCK), 442 to 485 (ELKD…FAPE), 505 to 549 (ITDK…TDKN), and 566 to 611 (NSFP…VKEE).

The protein belongs to the eIF-3 subunit B family. In terms of assembly, component of the eukaryotic translation initiation factor 3 (eIF-3) complex.

Its subcellular location is the cytoplasm. Functionally, RNA-binding component of the eukaryotic translation initiation factor 3 (eIF-3) complex, which is involved in protein synthesis of a specialized repertoire of mRNAs and, together with other initiation factors, stimulates binding of mRNA and methionyl-tRNAi to the 40S ribosome. The eIF-3 complex specifically targets and initiates translation of a subset of mRNAs involved in cell proliferation. The protein is Eukaryotic translation initiation factor 3 subunit B of Vanderwaltozyma polyspora (strain ATCC 22028 / DSM 70294 / BCRC 21397 / CBS 2163 / NBRC 10782 / NRRL Y-8283 / UCD 57-17) (Kluyveromyces polysporus).